The primary structure comprises 293 residues: Pyridoxal 5'-phosphate synthase subunit PdxS (293 aa).

Asp23 provides a ligand contact to D-ribose 5-phosphate. The Schiff-base intermediate with D-ribose 5-phosphate role is filled by Lys80. D-ribose 5-phosphate is bound at residue Gly152. Residue Arg164 participates in D-glyceraldehyde 3-phosphate binding. Residues Gly213 and 234–235 (GS) each bind D-ribose 5-phosphate.

The protein belongs to the PdxS/SNZ family. As to quaternary structure, in the presence of PdxT, forms a dodecamer of heterodimers.

The catalysed reaction is aldehydo-D-ribose 5-phosphate + D-glyceraldehyde 3-phosphate + L-glutamine = pyridoxal 5'-phosphate + L-glutamate + phosphate + 3 H2O + H(+). It functions in the pathway cofactor biosynthesis; pyridoxal 5'-phosphate biosynthesis. Functionally, catalyzes the formation of pyridoxal 5'-phosphate from ribose 5-phosphate (RBP), glyceraldehyde 3-phosphate (G3P) and ammonia. The ammonia is provided by the PdxT subunit. Can also use ribulose 5-phosphate and dihydroxyacetone phosphate as substrates, resulting from enzyme-catalyzed isomerization of RBP and G3P, respectively. This Dehalococcoides mccartyi (strain ATCC BAA-2100 / JCM 16839 / KCTC 5957 / BAV1) protein is Pyridoxal 5'-phosphate synthase subunit PdxS.